A 508-amino-acid chain; its full sequence is Photosystem II CP47 reaction center protein (508 aa).

6 consecutive transmembrane segments (helical) span residues 21-36 (SVHIMHTALVSGWAGS), 101-115 (IVFSGLCFLAAIWHW), 140-156 (GIHLFLSGLACFGFGAF), 203-218 (IAAGTLGILAGLFHLS), 237-252 (VLSSSIAAVFFAAFVV), and 457-472 (SFALLFFFGHIWHGAR).

It belongs to the PsbB/PsbC family. PsbB subfamily. PSII is composed of 1 copy each of membrane proteins PsbA, PsbB, PsbC, PsbD, PsbE, PsbF, PsbH, PsbI, PsbJ, PsbK, PsbL, PsbM, PsbT, PsbX, PsbY, PsbZ, Psb30/Ycf12, at least 3 peripheral proteins of the oxygen-evolving complex and a large number of cofactors. It forms dimeric complexes. Requires Binds multiple chlorophylls. PSII binds additional chlorophylls, carotenoids and specific lipids. as cofactor.

The protein localises to the plastid. The protein resides in the chloroplast thylakoid membrane. In terms of biological role, one of the components of the core complex of photosystem II (PSII). It binds chlorophyll and helps catalyze the primary light-induced photochemical processes of PSII. PSII is a light-driven water:plastoquinone oxidoreductase, using light energy to abstract electrons from H(2)O, generating O(2) and a proton gradient subsequently used for ATP formation. In Dioscorea elephantipes (Elephant's foot yam), this protein is Photosystem II CP47 reaction center protein.